A 153-amino-acid chain; its full sequence is Small ribosomal subunit protein uS13 (153 aa).

Belongs to the universal ribosomal protein uS13 family. As to quaternary structure, part of the 30S ribosomal subunit. Forms a loose heterodimer with protein S19. Forms two bridges to the 50S subunit in the 70S ribosome.

In terms of biological role, located at the top of the head of the 30S subunit, it contacts several helices of the 16S rRNA. In the 70S ribosome it contacts the 23S rRNA (bridge B1a) and protein L5 of the 50S subunit (bridge B1b), connecting the 2 subunits; these bridges are implicated in subunit movement. The protein is Small ribosomal subunit protein uS13 of Pyrobaculum calidifontis (strain DSM 21063 / JCM 11548 / VA1).